The following is a 149-amino-acid chain: GATA transcription factor 15 (149 aa).

The span at 1 to 10 shows a compositional bias: basic and acidic residues; that stretch reads MLDPTEKVID. 2 disordered regions span residues 1 to 41 and 76 to 102; these read MLDP…NEKK and RRTL…GDSL. The segment at 37–91 adopts a GATA-type zinc-finger fold; sequence SNEKKSCAICGTSKTPLWRGGPAGPKSLCNACGIRNRKKRRTLISNRSEDKKKKS.

It belongs to the type IV zinc-finger family. Class B subfamily.

It localises to the nucleus. Transcriptional regulator that specifically binds 5'-GATA-3' or 5'-GAT-3' motifs within gene promoters. This Arabidopsis thaliana (Mouse-ear cress) protein is GATA transcription factor 15 (GATA15).